A 132-amino-acid chain; its full sequence is Small ribosomal subunit protein uS11 (132 aa).

The protein belongs to the universal ribosomal protein uS11 family. Part of the 30S ribosomal subunit. Interacts with proteins S7 and S18. Binds to IF-3.

In terms of biological role, located on the platform of the 30S subunit, it bridges several disparate RNA helices of the 16S rRNA. Forms part of the Shine-Dalgarno cleft in the 70S ribosome. The protein is Small ribosomal subunit protein uS11 of Clostridium botulinum (strain 657 / Type Ba4).